The primary structure comprises 231 residues: Adenosylcobinamide-GDP ribazoletransferase (231 aa).

Transmembrane regions (helical) follow at residues 28-48, 97-117, 121-141, 162-182, and 209-229; these read LWLF…PHFI, TGAG…TLLY, FWEI…LMLL, VFIG…ESLA, and VIGS…TIAG.

The protein belongs to the CobS family. Mg(2+) is required as a cofactor.

Its subcellular location is the cell membrane. The catalysed reaction is alpha-ribazole + adenosylcob(III)inamide-GDP = adenosylcob(III)alamin + GMP + H(+). It carries out the reaction alpha-ribazole 5'-phosphate + adenosylcob(III)inamide-GDP = adenosylcob(III)alamin 5'-phosphate + GMP + H(+). It participates in cofactor biosynthesis; adenosylcobalamin biosynthesis; adenosylcobalamin from cob(II)yrinate a,c-diamide: step 7/7. In terms of biological role, joins adenosylcobinamide-GDP and alpha-ribazole to generate adenosylcobalamin (Ado-cobalamin). Also synthesizes adenosylcobalamin 5'-phosphate from adenosylcobinamide-GDP and alpha-ribazole 5'-phosphate. The protein is Adenosylcobinamide-GDP ribazoletransferase (cobS2) of Archaeoglobus fulgidus (strain ATCC 49558 / DSM 4304 / JCM 9628 / NBRC 100126 / VC-16).